The following is a 388-amino-acid chain: Glutamate 5-kinase (388 aa).

Lys-21 contacts ATP. Substrate is bound by residues Ser-61, Asp-148, and Asn-160. ATP contacts are provided by residues 180 to 181 and 222 to 228; these read TD and TGGMITK. One can recognise a PUA domain in the interval 285 to 363; it reads RGSVFLDPGA…RWLARELGAE (79 aa).

It belongs to the glutamate 5-kinase family.

It localises to the cytoplasm. The catalysed reaction is L-glutamate + ATP = L-glutamyl 5-phosphate + ADP. It functions in the pathway amino-acid biosynthesis; L-proline biosynthesis; L-glutamate 5-semialdehyde from L-glutamate: step 1/2. In terms of biological role, catalyzes the transfer of a phosphate group to glutamate to form L-glutamate 5-phosphate. The protein is Glutamate 5-kinase of Thermobifida fusca (strain YX).